An 85-amino-acid polypeptide reads, in one-letter code: Coiled-coil-helix-coiled-coil-helix domain-containing protein 7 (85 aa).

One can recognise a CHCH domain in the interval 13-55 (INPCLSESDASTRCLDENNYDKERCSTYFLKYKNCRKFWHSIM). 2 consecutive short sequence motifs (cx9C motif) follow at residues 16 to 26 (CLSESDASTRC) and 37 to 47 (CSTYFLKYKNC). 2 disulfides stabilise this stretch: cysteine 16-cysteine 47 and cysteine 26-cysteine 37.

It belongs to the CHCHD7 family. In terms of assembly, monomer.

Its subcellular location is the mitochondrion intermembrane space. In Macaca fascicularis (Crab-eating macaque), this protein is Coiled-coil-helix-coiled-coil-helix domain-containing protein 7 (CHCHD7).